Consider the following 220-residue polypeptide: N-(5'-phosphoribosyl)anthranilate isomerase (220 aa).

It belongs to the TrpF family.

It carries out the reaction N-(5-phospho-beta-D-ribosyl)anthranilate = 1-(2-carboxyphenylamino)-1-deoxy-D-ribulose 5-phosphate. The protein operates within amino-acid biosynthesis; L-tryptophan biosynthesis; L-tryptophan from chorismate: step 3/5. The chain is N-(5'-phosphoribosyl)anthranilate isomerase from Xylella fastidiosa (strain 9a5c).